Here is a 468-residue protein sequence, read N- to C-terminus: Cyclin-dependent kinase 14 (468 aa).

Serine 24, serine 77, and serine 94 each carry phosphoserine. The tract at residues 103–132 is disordered; it reads KTSSAGKESPKVRRHSSPSSPTSPKFGKAD. Position 133 is a phosphoserine (serine 133). A Protein kinase domain is found at 134 to 418; that stretch reads YEKLEKLGEG…AQAALSHEYF (285 aa). ATP is bound by residues 140-148 and lysine 163; that span reads LGEGSYATV. The active-site Proton acceptor is the aspartate 255. The tract at residues 448 to 468 is disordered; sequence ESMRAFGKNNSYGKSLSNSKH. The segment covering 455–468 has biased composition (polar residues); sequence KNNSYGKSLSNSKH.

This sequence belongs to the protein kinase superfamily. CMGC Ser/Thr protein kinase family. CDC2/CDKX subfamily. As to quaternary structure, found in a complex with LRP6, CCNY and CAPRIN2 during G2/M stage; CAPRIN2 functions as a scaffold for the complex by binding to CCNY via its N terminus and to CDK14 via its C terminus. Interacts with CCNY; CCNY mediates its recruitment to the plasma membrane and promotes phosphorylation of LRP6. Interacts with CCDN3 and CDKN1A. Interacts with SEPT8. Interacts with 14-3-3 proteina YWHAB, YWHAE, YWHAH and YWHAQ.

Its subcellular location is the cell membrane. The protein localises to the cytoplasm. The protein resides in the nucleus. The enzyme catalyses L-seryl-[protein] + ATP = O-phospho-L-seryl-[protein] + ADP + H(+). It carries out the reaction L-threonyl-[protein] + ATP = O-phospho-L-threonyl-[protein] + ADP + H(+). With respect to regulation, serine/threonine-protein kinase activity is promoted by associated cyclins CCDN3 and CCNY and repressed by CDKN1A. Its function is as follows. Serine/threonine-protein kinase involved in the control of the eukaryotic cell cycle, whose activity is controlled by an associated cyclin. Acts as a cell-cycle regulator of Wnt signaling pathway during G2/M phase by mediating the phosphorylation of LRP6 at 'Ser-1490', leading to the activation of the Wnt signaling pathway. Acts as a regulator of cell cycle progression and cell proliferation via its interaction with CCDN3. Phosphorylates RB1 in vitro, however the relevance of such result remains to be confirmed in vivo. May also play a role in meiosis, neuron differentiation and may indirectly act as a negative regulator of insulin-responsive glucose transport. This chain is Cyclin-dependent kinase 14 (CDK14), found in Dasypus novemcinctus (Nine-banded armadillo).